A 449-amino-acid polypeptide reads, in one-letter code: Probable glycine dehydrogenase (decarboxylating) subunit 1 (449 aa).

The protein belongs to the GcvP family. N-terminal subunit subfamily. The glycine cleavage system is composed of four proteins: P, T, L and H. In this organism, the P 'protein' is a heterodimer of two subunits.

The catalysed reaction is N(6)-[(R)-lipoyl]-L-lysyl-[glycine-cleavage complex H protein] + glycine + H(+) = N(6)-[(R)-S(8)-aminomethyldihydrolipoyl]-L-lysyl-[glycine-cleavage complex H protein] + CO2. Functionally, the glycine cleavage system catalyzes the degradation of glycine. The P protein binds the alpha-amino group of glycine through its pyridoxal phosphate cofactor; CO(2) is released and the remaining methylamine moiety is then transferred to the lipoamide cofactor of the H protein. The sequence is that of Probable glycine dehydrogenase (decarboxylating) subunit 1 from Sulfurisphaera tokodaii (strain DSM 16993 / JCM 10545 / NBRC 100140 / 7) (Sulfolobus tokodaii).